The following is a 420-amino-acid chain: uncharacterized protein (420 aa).

This sequence belongs to the Rv1128c/1148c/1588c/1702c/1945/3466 family.

This is an uncharacterized protein from Mycobacterium tuberculosis (strain CDC 1551 / Oshkosh).